A 1391-amino-acid chain; its full sequence is DNA-directed RNA polymerase subunit beta (1391 aa).

It belongs to the RNA polymerase beta chain family. As to quaternary structure, the RNAP catalytic core consists of 2 alpha, 1 beta, 1 beta' and 1 omega subunit. When a sigma factor is associated with the core the holoenzyme is formed, which can initiate transcription.

The catalysed reaction is RNA(n) + a ribonucleoside 5'-triphosphate = RNA(n+1) + diphosphate. In terms of biological role, DNA-dependent RNA polymerase catalyzes the transcription of DNA into RNA using the four ribonucleoside triphosphates as substrates. The protein is DNA-directed RNA polymerase subunit beta of Mycoplasma pneumoniae (strain ATCC 29342 / M129 / Subtype 1) (Mycoplasmoides pneumoniae).